A 481-amino-acid chain; its full sequence is MALRVYNTLSGTKEDFVTLEPGRVKMYVCGVTVYDHCHIGHARANVVFDMIYRYLRHAGYEVTYVRNYTDVDDKIINRANKEGVPFNVISERFIAEFDRDMAALGLDLPTYQPKATEHIAEMIQVIERLVAKGFAYAADGDVYFSVEAFDQYLKLSKRNLEEMQAGARIEVGEKKRHPMDFALWKGSKPGEPYWDSPWGQGRPGWHIECSAMSMKYLGETFDIHGGGKDLVFPHHENEIAQSEAANGKPFARYWIHNGFVNINAEKMSKSLGNFFTIKEVLESYDAEVLRFFLLSAHYRSPIDFSDQNLKEAAAGLERIYNALAGIDEAVAADGTGAGRIDEELAEKAAGLPTRFREAMDDDFNTAQALGYVFDLVRAVNRVLAEGEIDRAVLASAREAIDRVGAVLGLFTSEPGAFVERLKSRKAAALPIEAAEIERLIEERNAARKARDFRRADEIRDTLAAQGILLLDSAQGTTWKVK.

Cys29 is a Zn(2+) binding site. Positions 31–41 match the 'HIGH' region motif; that stretch reads VTVYDHCHIGH. Zn(2+) is bound by residues Cys209, His234, and Glu238. The short motif at 266–270 is the 'KMSKS' region element; that stretch reads KMSKS. Lys269 serves as a coordination point for ATP.

The protein belongs to the class-I aminoacyl-tRNA synthetase family. Monomer. It depends on Zn(2+) as a cofactor.

It is found in the cytoplasm. It catalyses the reaction tRNA(Cys) + L-cysteine + ATP = L-cysteinyl-tRNA(Cys) + AMP + diphosphate. This is Cysteine--tRNA ligase from Geobacter sulfurreducens (strain ATCC 51573 / DSM 12127 / PCA).